Here is a 123-residue protein sequence, read N- to C-terminus: MLPTENRLRRREDFATAVRRGRRAGRPLLVVHLRSGATDPHAPGESAPPTRAGFVVSKAVGGAVVRNQVKRRLRHLVCDRLSALPPGSLVVVRALPGAGDADHAQLARDLDAALQRLLGGGTR.

This sequence belongs to the RnpA family. Consists of a catalytic RNA component (M1 or rnpB) and a protein subunit.

The catalysed reaction is Endonucleolytic cleavage of RNA, removing 5'-extranucleotides from tRNA precursor.. Functionally, RNaseP catalyzes the removal of the 5'-leader sequence from pre-tRNA to produce the mature 5'-terminus. It can also cleave other RNA substrates such as 4.5S RNA. The protein component plays an auxiliary but essential role in vivo by binding to the 5'-leader sequence and broadening the substrate specificity of the ribozyme. The sequence is that of Ribonuclease P protein component from Streptomyces bikiniensis.